Here is a 928-residue protein sequence, read N- to C-terminus: Arf guanine nucleotide exchange factor sec74 (928 aa).

2 stretches are compositionally biased toward polar residues: residues methionine 1 to alanine 12 and threonine 57 to aspartate 83. 2 disordered regions span residues methionine 1–serine 152 and serine 227–glycine 249. Serine 67 is modified (phosphoserine). 2 stretches are compositionally biased toward low complexity: residues glycine 89–serine 102 and serine 115–serine 132. Residues leucine 228–threonine 420 enclose the SEC7 domain. A compositionally biased stretch (polar residues) spans alanine 234–serine 245. Residues lysine 548 to threonine 677 enclose the PH domain.

It localises to the cytoplasm. Its subcellular location is the cell tip. Its function is as follows. Guanine nucleotide exchange factor for Arf GTPases, stimulating the nucleotide exchange from the GDP-bound to the GTP-bound form. Involved in vesicular transport. In Schizosaccharomyces pombe (strain 972 / ATCC 24843) (Fission yeast), this protein is Arf guanine nucleotide exchange factor sec74 (sec74).